The sequence spans 1028 residues: RNA cytidine acetyltransferase 1 (1028 aa).

ATP contacts are provided by residues 286–295 and arginine 460; that span reads GRGKSAALGL. An N-acetyltransferase domain is found at 548 to 731; sequence VLLGPVDESK…FAPFYISQIP (184 aa). Acetyl-CoA is bound by residues 619-621, 626-632, and lysine 719; these read IAV and MKMGYGS. The tract at residues 989 to 1028 is disordered; the sequence is ISIESTKTDNKKEKPSGFDKSAKKRGNDKHSSTSNKKRRA. Over residues 994–1009 the composition is skewed to basic and acidic residues; the sequence is TKTDNKKEKPSGFDKS.

Belongs to the RNA cytidine acetyltransferase family. NAT10 subfamily.

It localises to the nucleus. The protein localises to the nucleolus. The catalysed reaction is a cytidine in 18S rRNA + acetyl-CoA + ATP + H2O = an N(4)-acetylcytidine in 18S rRNA + ADP + phosphate + CoA + H(+). The enzyme catalyses a cytidine in tRNA + acetyl-CoA + ATP + H2O = an N(4)-acetylcytidine in tRNA + ADP + phosphate + CoA + H(+). Functionally, RNA cytidine acetyltransferase with specificity toward both 18S rRNA and tRNAs. Catalyzes the formation of N(4)-acetylcytidine (ac4C) in 18S rRNA. Required for early nucleolar cleavages of precursor rRNA at sites A0, A1 and A2 during 18S rRNA synthesis. Catalyzes the formation of ac4C in serine and leucine tRNAs. Requires a tRNA-binding adapter protein for full tRNA acetyltransferase activity but not for 18S rRNA acetylation. This is RNA cytidine acetyltransferase 1 from Arabidopsis thaliana (Mouse-ear cress).